Reading from the N-terminus, the 177-residue chain is Transmembrane protein 275 (177 aa).

Residues 1–20 (MPQAKKSTETLAPAPPGRSR) are disordered. The next 2 helical transmembrane spans lie at 36–56 (GLCVLLAGLNVTLVGAFAAFL) and 63–83 (LVVGPALLVLALGFFAACCVC). Residues 113 to 177 (ESSERTAQDT…LNFPRDPAAS (65 aa)) are disordered. Residues 128–161 (SPAASAASSGRSSPGPGLFALDPPAPATAAPYLP) show a composition bias toward low complexity.

It localises to the membrane. This is Transmembrane protein 275 from Mus musculus (Mouse).